Reading from the N-terminus, the 358-residue chain is Probable branched-chain-amino-acid aminotransferase (358 aa).

An N6-(pyridoxal phosphate)lysine modification is found at Lys-196.

This sequence belongs to the class-IV pyridoxal-phosphate-dependent aminotransferase family. Requires pyridoxal 5'-phosphate as cofactor.

It carries out the reaction L-leucine + 2-oxoglutarate = 4-methyl-2-oxopentanoate + L-glutamate. The catalysed reaction is L-isoleucine + 2-oxoglutarate = (S)-3-methyl-2-oxopentanoate + L-glutamate. It catalyses the reaction L-valine + 2-oxoglutarate = 3-methyl-2-oxobutanoate + L-glutamate. The protein operates within amino-acid biosynthesis; L-isoleucine biosynthesis; L-isoleucine from 2-oxobutanoate: step 4/4. It participates in amino-acid biosynthesis; L-leucine biosynthesis; L-leucine from 3-methyl-2-oxobutanoate: step 4/4. It functions in the pathway amino-acid biosynthesis; L-valine biosynthesis; L-valine from pyruvate: step 4/4. Its function is as follows. Acts on leucine, isoleucine and valine. The protein is Probable branched-chain-amino-acid aminotransferase (ilvE) of Staphylococcus aureus (strain N315).